A 249-amino-acid polypeptide reads, in one-letter code: Glucosamine-6-phosphate deaminase (249 aa).

Asp-67 (proton acceptor; for enolization step) is an active-site residue. The active-site For ring-opening step is the Asn-136. The active-site Proton acceptor; for ring-opening step is the His-138. Glu-143 functions as the For ring-opening step in the catalytic mechanism.

It belongs to the glucosamine/galactosamine-6-phosphate isomerase family. NagB subfamily.

It carries out the reaction alpha-D-glucosamine 6-phosphate + H2O = beta-D-fructose 6-phosphate + NH4(+). The protein operates within amino-sugar metabolism; N-acetylneuraminate degradation; D-fructose 6-phosphate from N-acetylneuraminate: step 5/5. Functionally, catalyzes the reversible isomerization-deamination of glucosamine 6-phosphate (GlcN6P) to form fructose 6-phosphate (Fru6P) and ammonium ion. In Clostridioides difficile (strain 630) (Peptoclostridium difficile), this protein is Glucosamine-6-phosphate deaminase.